Consider the following 909-residue polypeptide: ABC transporter A family member 10 (909 aa).

Transmembrane regions (helical) follow at residues 35-55 (VLVP…LDVV), 320-340 (IASM…FPVI), 374-394 (FLTL…AIGL), 406-426 (FIFY…ASSI), 433-453 (ATVV…FLFG), 465-485 (GILA…YEFA), and 507-527 (LFYL…SIDL). The residue at position 555 (S555) is a Phosphoserine. In terms of domain architecture, ABC transporter spans 587–824 (IVCDNLKKVY…YGGSYVFTMT (238 aa)). 625 to 632 (GPNGAGKT) is a binding site for ATP.

The protein belongs to the ABC transporter superfamily. ABCA family. CPR flippase (TC 3.A.1.211) subfamily.

It localises to the membrane. The sequence is that of ABC transporter A family member 10 (ABCA10) from Arabidopsis thaliana (Mouse-ear cress).